The following is a 226-amino-acid chain: Endonuclease NucS (226 aa).

Belongs to the NucS endonuclease family.

The protein resides in the cytoplasm. Its function is as follows. Cleaves both 3' and 5' ssDNA extremities of branched DNA structures. This Mycobacterium tuberculosis (strain ATCC 25618 / H37Rv) protein is Endonuclease NucS.